Here is a 418-residue protein sequence, read N- to C-terminus: CinA-like protein (418 aa).

This sequence belongs to the CinA family.

The sequence is that of CinA-like protein from Leptospira borgpetersenii serovar Hardjo-bovis (strain L550).